Consider the following 377-residue polypeptide: Alanine racemase (377 aa).

Lys-37 acts as the Proton acceptor; specific for D-alanine in catalysis. Lys-37 carries the post-translational modification N6-(pyridoxal phosphate)lysine. Arg-135 provides a ligand contact to substrate. Tyr-271 serves as the catalytic Proton acceptor; specific for L-alanine. Position 319 (Met-319) interacts with substrate.

This sequence belongs to the alanine racemase family. Requires pyridoxal 5'-phosphate as cofactor.

It catalyses the reaction L-alanine = D-alanine. It participates in amino-acid biosynthesis; D-alanine biosynthesis; D-alanine from L-alanine: step 1/1. Its function is as follows. Catalyzes the interconversion of L-alanine and D-alanine. May also act on other amino acids. This is Alanine racemase (alr) from Helicobacter pylori (strain G27).